We begin with the raw amino-acid sequence, 379 residues long: Succinyl-diaminopimelate desuccinylase (379 aa).

Zn(2+) is bound at residue histidine 70. Aspartate 72 is an active-site residue. Zn(2+) is bound at residue aspartate 103. Glutamate 137 acts as the Proton acceptor in catalysis. Residues glutamate 138, glutamate 166, and histidine 352 each contribute to the Zn(2+) site.

Belongs to the peptidase M20A family. DapE subfamily. In terms of assembly, homodimer. It depends on Zn(2+) as a cofactor. The cofactor is Co(2+).

The enzyme catalyses N-succinyl-(2S,6S)-2,6-diaminopimelate + H2O = (2S,6S)-2,6-diaminopimelate + succinate. It participates in amino-acid biosynthesis; L-lysine biosynthesis via DAP pathway; LL-2,6-diaminopimelate from (S)-tetrahydrodipicolinate (succinylase route): step 3/3. In terms of biological role, catalyzes the hydrolysis of N-succinyl-L,L-diaminopimelic acid (SDAP), forming succinate and LL-2,6-diaminopimelate (DAP), an intermediate involved in the bacterial biosynthesis of lysine and meso-diaminopimelic acid, an essential component of bacterial cell walls. This Paraburkholderia xenovorans (strain LB400) protein is Succinyl-diaminopimelate desuccinylase.